The chain runs to 265 residues: Nitrogenase vanadium-iron protein alpha chain (265 aa).

The [8Fe-7S] cluster site is built by Cys-17 and Cys-80. Cys-199 lines the [7Fe-V-9S-C-homocitryl] cluster pocket.

It belongs to the NifD/NifK/NifE/NifN family. Hexamer of two alpha, two beta, and two delta chains. It depends on [8Fe-7S] cluster as a cofactor. [7Fe-V-9S-C-homocitryl] cluster is required as a cofactor.

It carries out the reaction N2 + 8 reduced [2Fe-2S]-[ferredoxin] + 16 ATP + 16 H2O = H2 + 8 oxidized [2Fe-2S]-[ferredoxin] + 2 NH4(+) + 16 ADP + 16 phosphate + 6 H(+). Its function is as follows. This vanadium-iron protein is part of the nitrogenase complex that catalyzes the key enzymatic reactions in nitrogen fixation. The chain is Nitrogenase vanadium-iron protein alpha chain (vnfD) from Azorhizophilus paspali (Azotobacter paspali).